Consider the following 743-residue polypeptide: Polyribonucleotide nucleotidyltransferase (743 aa).

Mg(2+) contacts are provided by Asp-489 and Asp-495. Positions 556–618 constitute a KH domain; the sequence is PRIEKMHIGK…PCIDAAIGMI (63 aa). Positions 628-698 constitute an S1 motif domain; the sequence is GETYPGKITS…KTGKFKLSRK (71 aa). The disordered stretch occupies residues 704–743; the sequence is PEGYVEPQPRERRERREGGREGGRNFERRGGDRDHREPRG.

The protein belongs to the polyribonucleotide nucleotidyltransferase family. The cofactor is Mg(2+).

The protein localises to the cytoplasm. The catalysed reaction is RNA(n+1) + phosphate = RNA(n) + a ribonucleoside 5'-diphosphate. Involved in mRNA degradation. Catalyzes the phosphorolysis of single-stranded polyribonucleotides processively in the 3'- to 5'-direction. This Porphyromonas gingivalis (strain ATCC BAA-308 / W83) protein is Polyribonucleotide nucleotidyltransferase.